A 494-amino-acid chain; its full sequence is NADPH:adrenodoxin oxidoreductase, mitochondrial (494 aa).

Residues 1–34 (MAPRCWHWWRWSAWSGLRPSPSRSTPTPGFCQKF) constitute a mitochondrion transit peptide. FAD is bound by residues Ala-51, Glu-72, Leu-80, and Val-116. NADP(+)-binding positions include 187-190 (QGNV), 231-232 (RR), and Glu-243. Residue Ser-313 is modified to Phosphoserine. Residues Trp-401 and 408-410 (GVI) each bind FAD. Position 408 (Gly-408) interacts with NADP(+).

Belongs to the ferredoxin--NADP reductase type 1 family. In terms of assembly, monomer. Interacts directly with FDX1. Requires FAD as cofactor. Expressed in the adrenal, testis and ovary and to a lesser extent in the liver and kidney.

It localises to the mitochondrion inner membrane. The catalysed reaction is 2 reduced [adrenodoxin] + NADP(+) + H(+) = 2 oxidized [adrenodoxin] + NADPH. The enzyme catalyses 2 reduced [2Fe-2S]-[ferredoxin] + NADP(+) + H(+) = 2 oxidized [2Fe-2S]-[ferredoxin] + NADPH. The protein operates within steroid metabolism; cholesterol metabolism. Serves as the first electron transfer protein in all the mitochondrial P450 systems including cholesterol side chain cleavage in all steroidogenic tissues, steroid 11-beta hydroxylation in the adrenal cortex, 25-OH-vitamin D3-24 hydroxylation in the kidney, and sterol C-27 hydroxylation in the liver. Also acts as a ferredoxin--NADP(+) reductase essential for coenzyme Q biosynthesis: together with FDX2, transfers the electrons required for the hydroxylation reaction performed by COQ6. The chain is NADPH:adrenodoxin oxidoreductase, mitochondrial (Fdxr) from Mus musculus (Mouse).